The chain runs to 294 residues: MFKGSIVALITPMDEKGQICRISLEKLINYHIASKTEAIVSIGTTGESATLSQEEHINIVMLTLELADGRIPVIAGTGANATTEAISLTKRFEKSGVAGCLSVTPYYNRPTQEGLYQHFKAISENTELPQILYNVPSRTGCDLLPETVAKLSHFNNIIGIKEATGDLSRIHKIKELVKTNFLLISGDDATALDFMQLGGQGVISVTANIAAKEMMEICSYALKGDFINARSINKRLMLLHEALFIEPNPIPVKWLAKKIGLIKSDTLRLPMTPVLDSTRFQLEKAIQYANLKIS.

Residue Thr45 participates in pyruvate binding. Tyr133 (proton donor/acceptor) is an active-site residue. The active-site Schiff-base intermediate with substrate is the Lys161. Position 203 (Ile203) interacts with pyruvate.

It belongs to the DapA family. In terms of assembly, homotetramer; dimer of dimers.

The protein localises to the cytoplasm. It catalyses the reaction L-aspartate 4-semialdehyde + pyruvate = (2S,4S)-4-hydroxy-2,3,4,5-tetrahydrodipicolinate + H2O + H(+). It functions in the pathway amino-acid biosynthesis; L-lysine biosynthesis via DAP pathway; (S)-tetrahydrodipicolinate from L-aspartate: step 3/4. Catalyzes the condensation of (S)-aspartate-beta-semialdehyde [(S)-ASA] and pyruvate to 4-hydroxy-tetrahydrodipicolinate (HTPA). This chain is 4-hydroxy-tetrahydrodipicolinate synthase, found in Buchnera aphidicola subsp. Acyrthosiphon pisum (strain 5A).